Reading from the N-terminus, the 262-residue chain is Phosphatidylglycerol--prolipoprotein diacylglyceryl transferase (262 aa).

4 consecutive transmembrane segments (helical) span residues 9 to 29 (LGPL…ILAV), 41 to 61 (IIPD…ILGA), 80 to 100 (IFAI…GALV), and 109 to 129 (LINT…AQSL). Arg-131 lines the a 1,2-diacyl-sn-glycero-3-phospho-(1'-sn-glycerol) pocket. Helical transmembrane passes span 167–187 (QPTF…ILIF), 197–217 (GHIT…IEGM), and 226–246 (GFRV…MIVI).

The protein belongs to the Lgt family.

Its subcellular location is the cell membrane. It carries out the reaction L-cysteinyl-[prolipoprotein] + a 1,2-diacyl-sn-glycero-3-phospho-(1'-sn-glycerol) = an S-1,2-diacyl-sn-glyceryl-L-cysteinyl-[prolipoprotein] + sn-glycerol 1-phosphate + H(+). The protein operates within protein modification; lipoprotein biosynthesis (diacylglyceryl transfer). Functionally, catalyzes the transfer of the diacylglyceryl group from phosphatidylglycerol to the sulfhydryl group of the N-terminal cysteine of a prolipoprotein, the first step in the formation of mature lipoproteins. The chain is Phosphatidylglycerol--prolipoprotein diacylglyceryl transferase from Streptococcus pneumoniae serotype 4 (strain ATCC BAA-334 / TIGR4).